Here is a 238-residue protein sequence, read N- to C-terminus: Large ribosomal subunit protein uL2 (238 aa).

The interval 201–238 (PFGGGGRQHPGRPKTVSRNTPPGRKVGSIAARRTGVGH) is disordered.

This sequence belongs to the universal ribosomal protein uL2 family. Part of the 50S ribosomal subunit. Forms a bridge to the 30S subunit in the 70S ribosome.

One of the primary rRNA binding proteins. Required for association of the 30S and 50S subunits to form the 70S ribosome, for tRNA binding and peptide bond formation. It has been suggested to have peptidyltransferase activity; this is somewhat controversial. Makes several contacts with the 16S rRNA in the 70S ribosome. In Methanocella arvoryzae (strain DSM 22066 / NBRC 105507 / MRE50), this protein is Large ribosomal subunit protein uL2.